The chain runs to 102 residues: MSDQATTLRIKPLGDRILVKREEEDSTARGGIILPDTAKKKQDRAEVLVLGTGKRDKDGNVLPFEVTVGDTVLIDKYAGQELTVDGEEYVIVQESEVMAVLK.

Belongs to the GroES chaperonin family. Heptamer of 7 subunits arranged in a ring. Interacts with the chaperonin GroEL.

The protein localises to the cytoplasm. Its function is as follows. Together with the chaperonin GroEL, plays an essential role in assisting protein folding. The GroEL-GroES system forms a nano-cage that allows encapsulation of the non-native substrate proteins and provides a physical environment optimized to promote and accelerate protein folding. GroES binds to the apical surface of the GroEL ring, thereby capping the opening of the GroEL channel. This is Co-chaperonin GroES from Chlamydia caviae (strain ATCC VR-813 / DSM 19441 / 03DC25 / GPIC) (Chlamydophila caviae).